A 256-amino-acid polypeptide reads, in one-letter code: Probable ABC transporter ATP-binding protein spyM18_0273 (256 aa).

The ABC transporter domain occupies 4 to 246; that stretch reads LEINNLHVSI…EKEGYAGIAQ (243 aa). Residue 36-43 participates in ATP binding; that stretch reads GPNGTGKS.

This sequence belongs to the ABC transporter superfamily. Ycf16 family.

The protein localises to the cell membrane. This Streptococcus pyogenes serotype M18 (strain MGAS8232) protein is Probable ABC transporter ATP-binding protein spyM18_0273.